Here is a 208-residue protein sequence, read N- to C-terminus: Methylthioribulose-1-phosphate dehydratase (208 aa).

His-98 and His-100 together coordinate Zn(2+).

It belongs to the aldolase class II family. MtnB subfamily. Zn(2+) is required as a cofactor.

The enzyme catalyses 5-(methylsulfanyl)-D-ribulose 1-phosphate = 5-methylsulfanyl-2,3-dioxopentyl phosphate + H2O. It functions in the pathway amino-acid biosynthesis; L-methionine biosynthesis via salvage pathway; L-methionine from S-methyl-5-thio-alpha-D-ribose 1-phosphate: step 2/6. Its function is as follows. Catalyzes the dehydration of methylthioribulose-1-phosphate (MTRu-1-P) into 2,3-diketo-5-methylthiopentyl-1-phosphate (DK-MTP-1-P). The protein is Methylthioribulose-1-phosphate dehydratase of Marinobacter nauticus (strain ATCC 700491 / DSM 11845 / VT8) (Marinobacter aquaeolei).